Reading from the N-terminus, the 273-residue chain is 3-methyl-2-oxobutanoate hydroxymethyltransferase (273 aa).

Positions 53 and 92 each coordinate Mg(2+). 3-methyl-2-oxobutanoate is bound by residues 53–54 (DS), Asp-92, and Lys-122. Residue Glu-124 coordinates Mg(2+). Residue Glu-191 is the Proton acceptor of the active site.

This sequence belongs to the PanB family. As to quaternary structure, homodecamer; pentamer of dimers. Mg(2+) is required as a cofactor.

It is found in the cytoplasm. The catalysed reaction is 3-methyl-2-oxobutanoate + (6R)-5,10-methylene-5,6,7,8-tetrahydrofolate + H2O = 2-dehydropantoate + (6S)-5,6,7,8-tetrahydrofolate. The protein operates within cofactor biosynthesis; (R)-pantothenate biosynthesis; (R)-pantoate from 3-methyl-2-oxobutanoate: step 1/2. Catalyzes the reversible reaction in which hydroxymethyl group from 5,10-methylenetetrahydrofolate is transferred onto alpha-ketoisovalerate to form ketopantoate. The polypeptide is 3-methyl-2-oxobutanoate hydroxymethyltransferase (Parabacteroides distasonis (strain ATCC 8503 / DSM 20701 / CIP 104284 / JCM 5825 / NCTC 11152)).